We begin with the raw amino-acid sequence, 57 residues long: uncharacterized protein (57 aa).

Residues 3–23 (PLTLLIIIGGVILGNELIISL) traverse the membrane as a helical segment. A disordered region spans residues 38–57 (KHKHKTQENYETFASDKKRT).

It localises to the host membrane. This is an uncharacterized protein from Acidianus bottle-shaped virus (isolate Italy/Pozzuoli) (ABV).